A 234-amino-acid polypeptide reads, in one-letter code: NAD-dependent protein deacylase (234 aa).

The Deacetylase sirtuin-type domain maps to 1–234 (MTKQVRIVVL…LVPHYLAQFL (234 aa)). An NAD(+)-binding site is contributed by 12 to 31 (GAGISAESGIRTFRATDGLW). Substrate contacts are provided by Y56 and R59. 93-96 (QNVD) provides a ligand contact to NAD(+). H111 acts as the Proton acceptor in catalysis. Positions 119 and 138 each coordinate Zn(2+). NAD(+) is bound by residues 178-180 (GTS), 204-206 (NLE), and A222.

This sequence belongs to the sirtuin family. Class III subfamily. It depends on Zn(2+) as a cofactor.

The protein resides in the cytoplasm. It carries out the reaction N(6)-acetyl-L-lysyl-[protein] + NAD(+) + H2O = 2''-O-acetyl-ADP-D-ribose + nicotinamide + L-lysyl-[protein]. The catalysed reaction is N(6)-succinyl-L-lysyl-[protein] + NAD(+) + H2O = 2''-O-succinyl-ADP-D-ribose + nicotinamide + L-lysyl-[protein]. In terms of biological role, NAD-dependent lysine deacetylase and desuccinylase that specifically removes acetyl and succinyl groups on target proteins. Modulates the activities of several proteins which are inactive in their acylated form. The polypeptide is NAD-dependent protein deacylase (Pasteurella multocida (strain Pm70)).